A 300-amino-acid chain; its full sequence is Type II restriction enzyme HindIII (300 aa).

It carries out the reaction Endonucleolytic cleavage of DNA to give specific double-stranded fragments with terminal 5'-phosphates.. A P subtype restriction enzyme that recognizes the double-stranded sequence 5'-AAGCTT-3' and cleaves after A-1. The protein is Type II restriction enzyme HindIII of Haemophilus influenzae (strain ATCC 51907 / DSM 11121 / KW20 / Rd).